The following is a 481-amino-acid chain: Cysteine--tRNA ligase (481 aa).

Position 27 (Cys27) interacts with Zn(2+). The 'HIGH' region motif lies at 29–39 (PTVYNYAHIGN). Zn(2+) contacts are provided by Cys222, His247, and Glu251. Residues 279-283 (KMSKS) carry the 'KMSKS' region motif. Lys282 is a binding site for ATP.

This sequence belongs to the class-I aminoacyl-tRNA synthetase family. As to quaternary structure, monomer. The cofactor is Zn(2+).

It is found in the cytoplasm. The catalysed reaction is tRNA(Cys) + L-cysteine + ATP = L-cysteinyl-tRNA(Cys) + AMP + diphosphate. The chain is Cysteine--tRNA ligase from Borrelia hermsii (strain HS1 / DAH).